The following is a 475-amino-acid chain: UDP-N-acetylmuramate--L-alanine ligase (475 aa).

Position 125–131 (125–131 (GTHGKTT)) interacts with ATP.

The protein belongs to the MurCDEF family.

It is found in the cytoplasm. It catalyses the reaction UDP-N-acetyl-alpha-D-muramate + L-alanine + ATP = UDP-N-acetyl-alpha-D-muramoyl-L-alanine + ADP + phosphate + H(+). The protein operates within cell wall biogenesis; peptidoglycan biosynthesis. Its function is as follows. Cell wall formation. The protein is UDP-N-acetylmuramate--L-alanine ligase of Actinobacillus pleuropneumoniae serotype 5b (strain L20).